The sequence spans 504 residues: Maturase K (504 aa).

The protein belongs to the intron maturase 2 family. MatK subfamily.

The protein localises to the plastid. Its subcellular location is the chloroplast. Usually encoded in the trnK tRNA gene intron. Probably assists in splicing its own and other chloroplast group II introns. This Gossypium barbadense (Sea Island cotton) protein is Maturase K.